Reading from the N-terminus, the 184-residue chain is Peptidyl-tRNA hydrolase (184 aa).

Tyr-14 contacts tRNA. His-19 (proton acceptor) is an active-site residue. Positions 64, 66, and 112 each coordinate tRNA.

Belongs to the PTH family. In terms of assembly, monomer.

It localises to the cytoplasm. The enzyme catalyses an N-acyl-L-alpha-aminoacyl-tRNA + H2O = an N-acyl-L-amino acid + a tRNA + H(+). Hydrolyzes ribosome-free peptidyl-tRNAs (with 1 or more amino acids incorporated), which drop off the ribosome during protein synthesis, or as a result of ribosome stalling. Functionally, catalyzes the release of premature peptidyl moieties from peptidyl-tRNA molecules trapped in stalled 50S ribosomal subunits, and thus maintains levels of free tRNAs and 50S ribosomes. The sequence is that of Peptidyl-tRNA hydrolase from Thermoanaerobacter sp. (strain X514).